The primary structure comprises 473 residues: Ribulose bisphosphate carboxylase large chain 1 (473 aa).

Residues Asn116 and Thr166 each coordinate substrate. Catalysis depends on Lys168, which acts as the Proton acceptor. Lys170 serves as a coordination point for substrate. 3 residues coordinate Mg(2+): Lys194, Asp196, and Glu197. Position 194 is an N6-carboxylysine (Lys194). The active-site Proton acceptor is His287. Residues Arg288, His320, and Ser372 each contribute to the substrate site.

This sequence belongs to the RuBisCO large chain family. Type I subfamily. Heterohexadecamer of 8 large chains and 8 small chains. The cofactor is Mg(2+).

The enzyme catalyses 2 (2R)-3-phosphoglycerate + 2 H(+) = D-ribulose 1,5-bisphosphate + CO2 + H2O. The catalysed reaction is D-ribulose 1,5-bisphosphate + O2 = 2-phosphoglycolate + (2R)-3-phosphoglycerate + 2 H(+). RuBisCO catalyzes two reactions: the carboxylation of D-ribulose 1,5-bisphosphate, the primary event in carbon dioxide fixation, as well as the oxidative fragmentation of the pentose substrate. Both reactions occur simultaneously and in competition at the same active site. This is Ribulose bisphosphate carboxylase large chain 1 from Acidithiobacillus ferrooxidans (Thiobacillus ferrooxidans).